Reading from the N-terminus, the 364-residue chain is DNA replication and repair protein RecF (364 aa).

Residue Gly-30–Thr-37 participates in ATP binding.

It belongs to the RecF family.

It localises to the cytoplasm. In terms of biological role, the RecF protein is involved in DNA metabolism; it is required for DNA replication and normal SOS inducibility. RecF binds preferentially to single-stranded, linear DNA. It also seems to bind ATP. The sequence is that of DNA replication and repair protein RecF from Citrifermentans bemidjiense (strain ATCC BAA-1014 / DSM 16622 / JCM 12645 / Bem) (Geobacter bemidjiensis).